The following is a 331-amino-acid chain: Anthranilate phosphoribosyltransferase (331 aa).

5-phospho-alpha-D-ribose 1-diphosphate contacts are provided by residues Gly-79, 82 to 83, Thr-87, 89 to 92, 107 to 115, and Ala-119; these read GD, NIST, and KHGNYGATS. Gly-79 contacts anthranilate. Position 91 (Ser-91) interacts with Mg(2+). Position 110 (Asn-110) interacts with anthranilate. Arg-165 is an anthranilate binding site. Asp-223 and Glu-224 together coordinate Mg(2+).

It belongs to the anthranilate phosphoribosyltransferase family. In terms of assembly, homodimer. Requires Mg(2+) as cofactor.

It catalyses the reaction N-(5-phospho-beta-D-ribosyl)anthranilate + diphosphate = 5-phospho-alpha-D-ribose 1-diphosphate + anthranilate. It functions in the pathway amino-acid biosynthesis; L-tryptophan biosynthesis; L-tryptophan from chorismate: step 2/5. Its function is as follows. Catalyzes the transfer of the phosphoribosyl group of 5-phosphorylribose-1-pyrophosphate (PRPP) to anthranilate to yield N-(5'-phosphoribosyl)-anthranilate (PRA). This chain is Anthranilate phosphoribosyltransferase, found in Bacteroides fragilis (strain ATCC 25285 / DSM 2151 / CCUG 4856 / JCM 11019 / LMG 10263 / NCTC 9343 / Onslow / VPI 2553 / EN-2).